The following is a 242-amino-acid chain: UPF0246 protein SPD_1378 (242 aa).

This sequence belongs to the UPF0246 family.

The sequence is that of UPF0246 protein SPD_1378 from Streptococcus pneumoniae serotype 2 (strain D39 / NCTC 7466).